A 105-amino-acid chain; its full sequence is Small ribosomal subunit protein uS10 (105 aa).

The protein belongs to the universal ribosomal protein uS10 family. In terms of assembly, part of the 30S ribosomal subunit.

Its function is as follows. Involved in the binding of tRNA to the ribosomes. The protein is Small ribosomal subunit protein uS10 of Picosynechococcus sp. (strain ATCC 27264 / PCC 7002 / PR-6) (Agmenellum quadruplicatum).